The primary structure comprises 142 residues: Large ribosomal subunit protein uL13 (142 aa).

The protein belongs to the universal ribosomal protein uL13 family. As to quaternary structure, part of the 50S ribosomal subunit.

In terms of biological role, this protein is one of the early assembly proteins of the 50S ribosomal subunit, although it is not seen to bind rRNA by itself. It is important during the early stages of 50S assembly. The chain is Large ribosomal subunit protein uL13 from Pseudomonas entomophila (strain L48).